The chain runs to 479 residues: F-box protein SKIP17 (479 aa).

Residues 92–138 (NSNSWSLPPELTIKVFSMLDTKSMMQAAVCCTMFNKCAMDRLCYSHI) enclose the F-box domain. A disordered region spans residues 435–479 (EMMEAEDDEVDEEDDSDDDTDDVSDEDESENDDDMGMGFDVDYLL). Over residues 437–469 (MEAEDDEVDEEDDSDDDTDDVSDEDESENDDDM) the composition is skewed to acidic residues.

In terms of assembly, part of a SCF (ASK-cullin-F-box) protein ligase complex. Interacts with SPK1B/ASK2.

It is found in the nucleus. Its pathway is protein modification; protein ubiquitination. Functionally, component of SCF(ASK-cullin-F-box) E3 ubiquitin ligase complexes, which may mediate the ubiquitination and subsequent proteasomal degradation of target proteins. The sequence is that of F-box protein SKIP17 (SKIP17) from Arabidopsis thaliana (Mouse-ear cress).